The primary structure comprises 710 residues: Cyclin-dependent kinase G-2 (710 aa).

A disordered region spans residues 1-350 (MAAGRHGGYR…ETPEPVKPPH (350 aa)). The span at 8-30 (GYRDYEARERELDAEASRRSKEQ) shows a compositional bias: basic and acidic residues. A compositionally biased stretch (basic residues) spans 31–40 (QHHHHPSGRH). The span at 41–64 (QRGDSDPRCEADRRRDGGRSRGGR) shows a compositional bias: basic and acidic residues. The span at 124-133 (SVVAASASSP) shows a compositional bias: low complexity. A compositionally biased stretch (basic and acidic residues) spans 144–163 (WDRDSPKPMHSDVAKGKKAV). A compositionally biased stretch (pro residues) spans 170 to 182 (LPLPPPPPLPPQD). Composition is skewed to basic and acidic residues over residues 183 to 195 (HIPE…KSPM) and 209 to 218 (LQEHAESRVM). Residues 299–308 (DENEDLEVDK) show a composition bias toward acidic residues. Residues 335–344 (YEVRRSETPE) are compositionally biased toward basic and acidic residues. In terms of domain architecture, Protein kinase spans 365–656 (FERLNKINEG…ADAALQHEWF (292 aa)). Residues 371–379 (INEGTYGVV) and K394 each bind ATP. Position 375 is a phosphothreonine (T375). The residue at position 376 (Y376) is a Phosphotyrosine. The active-site Proton acceptor is the D489. Residue S516 is modified to Phosphoserine. Position 522 is a phosphothreonine (T522).

The protein belongs to the protein kinase superfamily. CMGC Ser/Thr protein kinase family. CDC2/CDKX subfamily.

The enzyme catalyses L-seryl-[protein] + ATP = O-phospho-L-seryl-[protein] + ADP + H(+). It carries out the reaction L-threonyl-[protein] + ATP = O-phospho-L-threonyl-[protein] + ADP + H(+). The catalysed reaction is [DNA-directed RNA polymerase] + ATP = phospho-[DNA-directed RNA polymerase] + ADP + H(+). The chain is Cyclin-dependent kinase G-2 (CDKG-2) from Oryza sativa subsp. indica (Rice).